The primary structure comprises 192 residues: Ethylene-responsive transcription factor ERF027 (192 aa).

Residues 18–74 constitute a DNA-binding region (AP2/ERF); it reads VYRGIRCRSGKWVSEIREPRKTTRIWLGTYPMAEMAAAAYDVAAMALKGREAVLNFP. Disordered regions lie at residues 104-132 and 167-192; these read CEEG…HVDN and APPS…LWGY. Positions 179–192 are enriched in acidic residues; sequence DSPENSNDEDLWGY.

Belongs to the AP2/ERF transcription factor family. ERF subfamily.

It localises to the nucleus. Probably acts as a transcriptional activator. Binds to the GCC-box pathogenesis-related promoter element. May be involved in the regulation of gene expression by stress factors and by components of stress signal transduction pathways. This chain is Ethylene-responsive transcription factor ERF027 (ERF027), found in Arabidopsis thaliana (Mouse-ear cress).